We begin with the raw amino-acid sequence, 441 residues long: Transducin-like enhancer protein 7 (441 aa).

Disordered regions lie at residues 1–77 (MSGE…QWHL) and 91–119 (PDAQPGEAAESSPSFLLGSEVGQPYSSSS). The span at 27–49 (ESSGVSSQPEPQVQQQLGSLLGV) shows a compositional bias: low complexity. A compositionally biased stretch (polar residues) spans 62-76 (PADQETSTVTQQQWH). Over residues 108–119 (GSEVGQPYSSSS) the composition is skewed to low complexity. WD repeat units follow at residues 156–194 (FHGKRVYAVAISGSTHHVYTCGSGYIRVWDESALHAGEK), 204–243 (HPQDRVVTCKLFPDERSLITGGASQAVTLWDLAPTPQVRA), 247–285 (STGPTCYSLAVSSDAHICLACFHGFVEIWDLQNQILIRK), 286–325 (HEVPVYGSRCVDITGNIFWTGGEDTILYSWDLRSYQRLHQ), and 409–441 (EESSGILCCDVSSDNQYLVMGSSSSATIYQLLY).

This sequence belongs to the WD repeat Groucho/TLE family.

This chain is Transducin-like enhancer protein 7, found in Homo sapiens (Human).